A 177-amino-acid polypeptide reads, in one-letter code: ATP synthase subunit delta (177 aa).

The protein belongs to the ATPase delta chain family. As to quaternary structure, F-type ATPases have 2 components, F(1) - the catalytic core - and F(0) - the membrane proton channel. F(1) has five subunits: alpha(3), beta(3), gamma(1), delta(1), epsilon(1). F(0) has three main subunits: a(1), b(2) and c(10-14). The alpha and beta chains form an alternating ring which encloses part of the gamma chain. F(1) is attached to F(0) by a central stalk formed by the gamma and epsilon chains, while a peripheral stalk is formed by the delta and b chains.

The protein resides in the cell inner membrane. Functionally, f(1)F(0) ATP synthase produces ATP from ADP in the presence of a proton or sodium gradient. F-type ATPases consist of two structural domains, F(1) containing the extramembraneous catalytic core and F(0) containing the membrane proton channel, linked together by a central stalk and a peripheral stalk. During catalysis, ATP synthesis in the catalytic domain of F(1) is coupled via a rotary mechanism of the central stalk subunits to proton translocation. Its function is as follows. This protein is part of the stalk that links CF(0) to CF(1). It either transmits conformational changes from CF(0) to CF(1) or is implicated in proton conduction. This chain is ATP synthase subunit delta, found in Shewanella sediminis (strain HAW-EB3).